A 578-amino-acid polypeptide reads, in one-letter code: MGKGTDKLYITHSEWSSADAFSPSIGAGASRNQQATASFRRLPFNFCAASLQPFKNPVCTPDGTIFDVEVIGVWLEKHPNQNPVTGEPLQKKDLIRLNFARNSESDSLGAGLSDGKGDLIDPVTYKVFTDNTHIVAIRHGTYANVFAWDTVDRMNIKAKSWRDLVDDEEFTRADIITLQDPQNAASRDLNQFKFLKEGHEAQLTKEQEEERNAGNINAGALGSMGEKVSRAKAAVEKARKAREQGGDVNRSSTALTKPTGAGTVVRQSMINDKKLAVNSATYTTGKAAASFTSTGLTPETSGERALLSDEEYMLKPKRVKATGFARMETNMGDLTIELYPEFAPKAVWNFIKLSQTGYYKGVAFHRNIPNFMIQGGDPSGSGRGGQSVWGKYFDDEFDGPMTHNGRGTLSMANKGKNTNSSQFFFAYKPTPHLDRKHTVFGKVVENINVLSKMENVPTDGSNRPLNKILIKDIVILLDPFAEFQKQKQANELQTKEREKIRLQGGTDDDKTTWTGKRIRSDGSMENTGAGESVGKYLKTTTQQSTPTVNEADLEDVDTWEEPVRKKAKGGGFGNFDNW.

Residues Arg-40–Asp-114 enclose the U-box domain. The interval Lys-240 to Gly-260 is disordered. The PPIase cyclophilin-type domain maps to Ala-321–Ile-475. The disordered stretch occupies residues Gly-505–Trp-578. Polar residues predominate over residues Lys-538–Val-548. Residues Ala-551–Glu-560 are compositionally biased toward acidic residues. Positions Gly-569–Trp-578 are enriched in gly residues.

Belongs to the cyclophilin-type PPIase family. PPIL2 subfamily.

It localises to the nucleus. It carries out the reaction [protein]-peptidylproline (omega=180) = [protein]-peptidylproline (omega=0). It catalyses the reaction S-ubiquitinyl-[E2 ubiquitin-conjugating enzyme]-L-cysteine + [acceptor protein]-L-lysine = [E2 ubiquitin-conjugating enzyme]-L-cysteine + N(6)-ubiquitinyl-[acceptor protein]-L-lysine.. It participates in protein modification; protein ubiquitination. May catalyze the cis-trans isomerization of proline imidic peptide bonds in oligopeptides thereby assisting the folding of proteins. May also function as a chaperone, playing a role in intracellular transport of proteins. May also have a protein ubiquitin ligase activity acting as an E3 ubiquitin protein ligase or as a ubiquitin-ubiquitin ligase promoting elongation of ubiquitin chains on proteins. This Gibberella zeae (strain ATCC MYA-4620 / CBS 123657 / FGSC 9075 / NRRL 31084 / PH-1) (Wheat head blight fungus) protein is Peptidyl-prolyl cis-trans isomerase-like 2 (CYP8).